The chain runs to 305 residues: Sulfate adenylyltransferase subunit 2 (305 aa).

It belongs to the PAPS reductase family. CysD subfamily. Heterodimer composed of CysD, the smaller subunit, and CysN.

It catalyses the reaction sulfate + ATP + H(+) = adenosine 5'-phosphosulfate + diphosphate. Its pathway is sulfur metabolism; hydrogen sulfide biosynthesis; sulfite from sulfate: step 1/3. In terms of biological role, with CysN forms the ATP sulfurylase (ATPS) that catalyzes the adenylation of sulfate producing adenosine 5'-phosphosulfate (APS) and diphosphate, the first enzymatic step in sulfur assimilation pathway. APS synthesis involves the formation of a high-energy phosphoric-sulfuric acid anhydride bond driven by GTP hydrolysis by CysN coupled to ATP hydrolysis by CysD. The polypeptide is Sulfate adenylyltransferase subunit 2 (Pseudomonas savastanoi pv. phaseolicola (strain 1448A / Race 6) (Pseudomonas syringae pv. phaseolicola (strain 1448A / Race 6))).